The sequence spans 418 residues: Gamma-glutamyl phosphate reductase (418 aa).

Belongs to the gamma-glutamyl phosphate reductase family.

The protein localises to the cytoplasm. It carries out the reaction L-glutamate 5-semialdehyde + phosphate + NADP(+) = L-glutamyl 5-phosphate + NADPH + H(+). It participates in amino-acid biosynthesis; L-proline biosynthesis; L-glutamate 5-semialdehyde from L-glutamate: step 2/2. Its function is as follows. Catalyzes the NADPH-dependent reduction of L-glutamate 5-phosphate into L-glutamate 5-semialdehyde and phosphate. The product spontaneously undergoes cyclization to form 1-pyrroline-5-carboxylate. This chain is Gamma-glutamyl phosphate reductase, found in Chlorobium chlorochromatii (strain CaD3).